An 873-amino-acid polypeptide reads, in one-letter code: Protein translocase subunit SecA (873 aa).

ATP contacts are provided by residues Gln-88, Gly-106–Thr-110, and Asp-501. The Zn(2+) site is built by Cys-856, Cys-858, Cys-867, and His-868.

Belongs to the SecA family. As to quaternary structure, monomer and homodimer. Part of the essential Sec protein translocation apparatus which comprises SecA, SecYEG and auxiliary proteins SecDF-YajC and YidC. Requires Zn(2+) as cofactor.

It localises to the cell inner membrane. Its subcellular location is the cytoplasm. It catalyses the reaction ATP + H2O + cellular proteinSide 1 = ADP + phosphate + cellular proteinSide 2.. In terms of biological role, part of the Sec protein translocase complex. Interacts with the SecYEG preprotein conducting channel. Has a central role in coupling the hydrolysis of ATP to the transfer of proteins into and across the cell membrane, serving both as a receptor for the preprotein-SecB complex and as an ATP-driven molecular motor driving the stepwise translocation of polypeptide chains across the membrane. This Anaplasma phagocytophilum (strain HZ) protein is Protein translocase subunit SecA.